Here is a 524-residue protein sequence, read N- to C-terminus: Probable beta-1,4-xylosyltransferase IRX14 (524 aa).

The Cytoplasmic portion of the chain corresponds to 1-51 (MMKSLLPQSQLRRSAAAASAARSSGGGAGSGGADGAGSDGGAGGRAPATST). A disordered region spans residues 21–41 (ARSSGGGAGSGGADGAGSDGG). The span at 24–41 (SGGGAGSGGADGAGSDGG) shows a compositional bias: gly residues. The chain crosses the membrane as a helical; Signal-anchor for type II membrane protein span at residues 52-71 (FWFLLHALCCLVSLFLGFRF). Over 72–524 (SRLLFFLLFS…SRSTTKRKEN (453 aa)) the chain is Lumenal. N-linked (GlcNAc...) asparagine glycans are attached at residues asparagine 132, asparagine 135, asparagine 240, and asparagine 353. Residues 492 to 524 (AELVDSKQDQEGRRLSRTDRSSRSRSTTKRKEN) are disordered. The segment covering 495-513 (VDSKQDQEGRRLSRTDRSS) has biased composition (basic and acidic residues).

The protein belongs to the glycosyltransferase 43 family.

Its subcellular location is the golgi apparatus membrane. In terms of biological role, probable beta-1,4-xylosyltransferase involved in xylan biosynthesis in cell walls. This chain is Probable beta-1,4-xylosyltransferase IRX14, found in Oryza sativa subsp. japonica (Rice).